Here is a 242-residue protein sequence, read N- to C-terminus: Uridylate kinase (242 aa).

15–18 contacts ATP; that stretch reads KLSG. Residue G57 coordinates UMP. Positions 58 and 62 each coordinate ATP. Residues D78 and 139-146 contribute to the UMP site; that span reads TGNPFFTT. 3 residues coordinate ATP: T166, Y172, and D175.

It belongs to the UMP kinase family. In terms of assembly, homohexamer.

It localises to the cytoplasm. It carries out the reaction UMP + ATP = UDP + ADP. The protein operates within pyrimidine metabolism; CTP biosynthesis via de novo pathway; UDP from UMP (UMPK route): step 1/1. Its activity is regulated as follows. Inhibited by UTP. Catalyzes the reversible phosphorylation of UMP to UDP. In Acinetobacter baylyi (strain ATCC 33305 / BD413 / ADP1), this protein is Uridylate kinase.